Consider the following 399-residue polypeptide: Sister chromatid cohesion protein DCC1 (399 aa).

The protein belongs to the DCC1 family. Component of the CTF18-RFC complex which consists of CTF8, CTF18, DSCC1 and the RFC complex. Interacts with CTF8 and CTF18. Interacts with DDX11.

The protein resides in the nucleus. Its function is as follows. Loads PCNA onto primed templates regulating velocity, spacing and restart activity of replication forks. May couple DNA replication to sister chromatid cohesion through regulation of the acetylation of the cohesin subunit SMC3. The chain is Sister chromatid cohesion protein DCC1 (DSCC1) from Mus musculus (Mouse).